We begin with the raw amino-acid sequence, 476 residues long: Adenosylhomocysteinase (476 aa).

Positions 67, 142, and 202 each coordinate substrate. 203 to 205 (TTT) is an NAD(+) binding site. Lys-232 and Asp-236 together coordinate substrate. NAD(+)-binding positions include Asn-237, 266–271 (GYGDVG), Glu-289, Asn-324, 345–347 (IGH), and Asn-390.

The protein belongs to the adenosylhomocysteinase family. Requires NAD(+) as cofactor.

It localises to the cytoplasm. It carries out the reaction S-adenosyl-L-homocysteine + H2O = L-homocysteine + adenosine. It functions in the pathway amino-acid biosynthesis; L-homocysteine biosynthesis; L-homocysteine from S-adenosyl-L-homocysteine: step 1/1. Its function is as follows. May play a key role in the regulation of the intracellular concentration of adenosylhomocysteine. The polypeptide is Adenosylhomocysteinase (Prochlorococcus marinus (strain MIT 9313)).